Here is a 362-residue protein sequence, read N- to C-terminus: Peptide chain release factor 1 (362 aa).

Position 237 is an N5-methylglutamine (Gln-237).

It belongs to the prokaryotic/mitochondrial release factor family. In terms of processing, methylated by PrmC. Methylation increases the termination efficiency of RF1.

Its subcellular location is the cytoplasm. Its function is as follows. Peptide chain release factor 1 directs the termination of translation in response to the peptide chain termination codons UAG and UAA. In Legionella pneumophila (strain Corby), this protein is Peptide chain release factor 1.